The primary structure comprises 2142 residues: U5 small nuclear ribonucleoprotein 200 kDa helicase (2142 aa).

Disordered stretches follow at residues 52–74 (MGDRYQRTKPEKTEERKVKRQKR), 211–234 (EESEEESDNDMYGEIRDDDAQDEG), and 366–396 (RQLDTGKSEDQEEGEARGSKRGKGDAEDGGA). Residues 369 to 391 (DTGKSEDQEEGEARGSKRGKGDA) are compositionally biased toward basic and acidic residues. The region spanning 490-673 (KAALDSDENM…FLRVKPDKGL (184 aa)) is the Helicase ATP-binding 1 domain. 503–510 (APTGAGKT) serves as a coordination point for ATP. Positions 615–618 (DEIH) match the DEIH box motif. A Helicase C-terminal 1 domain is found at 684-917 (SLEQQYIGVT…GTVQHLQDAV (234 aa)). Residues 981 to 1286 (VTDLGRIASH…GAETQLPVSF (306 aa)) enclose the SEC63 1 domain. Positions 1337-1511 (NAVYNSDENV…WLGCNPNATF (175 aa)) constitute a Helicase ATP-binding 2 domain. 1350 to 1357 (APTGSGKM) lines the ATP pocket. The DELQ box signature appears at 1453–1456 (DELQ). A Helicase C-terminal 2 domain is found at 1544-1752 (PVYNAILKYS…TIENKQDAVD (209 aa)). The 318-residue stretch at 1811–2128 (PLNLGMIAAY…GCDQEYKFSI (318 aa)) folds into the SEC63 2 domain.

It belongs to the helicase family. SKI2 subfamily.

It localises to the nucleus. It catalyses the reaction ATP + H2O = ADP + phosphate + H(+). Functionally, catalyzes the ATP-dependent unwinding of U4/U6 RNA duplices, an essential step in the assembly of a catalytically active spliceosome. Plays a role in pre-mRNA splicing. The chain is U5 small nuclear ribonucleoprotein 200 kDa helicase from Drosophila melanogaster (Fruit fly).